The sequence spans 1167 residues: Chromosome partition protein Smc (1167 aa).

32 to 39 contributes to the ATP binding site; the sequence is PNGCGKSN. 5 coiled-coil regions span residues 170 to 274, 310 to 390, 468 to 500, 653 to 870, and 982 to 1011; these read ISKY…RIET, QREL…HNRD, GLQEQQRASQGELAEVRKQAQAARGRLSSLETL, ALLR…ERAL, and EYLDAQNLDLNTALETLEEAIRKIDRETRG.

The protein belongs to the SMC family. In terms of assembly, homodimer.

The protein localises to the cytoplasm. In terms of biological role, required for chromosome condensation and partitioning. This is Chromosome partition protein Smc from Xanthomonas oryzae pv. oryzae (strain KACC10331 / KXO85).